The chain runs to 429 residues: Bifunctional protein GlmU (429 aa).

The segment at 1 to 223 (MKTSILILAA…EDEFMGINDK (223 aa)) is pyrophosphorylase. Residues 8–11 (LAAG), Lys22, and 81–82 (GT) contribute to the UDP-N-acetyl-alpha-D-glucosamine site. Position 102 (Asp102) interacts with Mg(2+). 4 residues coordinate UDP-N-acetyl-alpha-D-glucosamine: Gly135, Glu149, Asn164, and Asn221. Asn221 serves as a coordination point for Mg(2+). The tract at residues 224–244 (FELSIAENFMQEKIKKYWMQQ) is linker. The tract at residues 245 to 429 (GVIFHLPQST…KDYYYKKFQK (185 aa)) is N-acetyltransferase. Residues Arg308 and Lys325 each contribute to the UDP-N-acetyl-alpha-D-glucosamine site. Catalysis depends on His336, which acts as the Proton acceptor. UDP-N-acetyl-alpha-D-glucosamine is bound by residues Tyr339 and Asn350. Residues 359-360 (NY), Ser378, Ala396, and Arg413 contribute to the acetyl-CoA site.

In the N-terminal section; belongs to the N-acetylglucosamine-1-phosphate uridyltransferase family. The protein in the C-terminal section; belongs to the transferase hexapeptide repeat family. Homotrimer. Mg(2+) is required as a cofactor.

It is found in the cytoplasm. It carries out the reaction alpha-D-glucosamine 1-phosphate + acetyl-CoA = N-acetyl-alpha-D-glucosamine 1-phosphate + CoA + H(+). The catalysed reaction is N-acetyl-alpha-D-glucosamine 1-phosphate + UTP + H(+) = UDP-N-acetyl-alpha-D-glucosamine + diphosphate. It participates in nucleotide-sugar biosynthesis; UDP-N-acetyl-alpha-D-glucosamine biosynthesis; N-acetyl-alpha-D-glucosamine 1-phosphate from alpha-D-glucosamine 6-phosphate (route II): step 2/2. It functions in the pathway nucleotide-sugar biosynthesis; UDP-N-acetyl-alpha-D-glucosamine biosynthesis; UDP-N-acetyl-alpha-D-glucosamine from N-acetyl-alpha-D-glucosamine 1-phosphate: step 1/1. Its pathway is bacterial outer membrane biogenesis; LPS lipid A biosynthesis. Catalyzes the last two sequential reactions in the de novo biosynthetic pathway for UDP-N-acetylglucosamine (UDP-GlcNAc). The C-terminal domain catalyzes the transfer of acetyl group from acetyl coenzyme A to glucosamine-1-phosphate (GlcN-1-P) to produce N-acetylglucosamine-1-phosphate (GlcNAc-1-P), which is converted into UDP-GlcNAc by the transfer of uridine 5-monophosphate (from uridine 5-triphosphate), a reaction catalyzed by the N-terminal domain. The sequence is that of Bifunctional protein GlmU from Campylobacter jejuni subsp. jejuni serotype O:6 (strain 81116 / NCTC 11828).